We begin with the raw amino-acid sequence, 438 residues long: UDP-N-acetylmuramoylalanine--D-glutamate ligase (438 aa).

Residue 105 to 111 (GSNGKTT) participates in ATP binding.

This sequence belongs to the MurCDEF family.

The protein resides in the cytoplasm. It catalyses the reaction UDP-N-acetyl-alpha-D-muramoyl-L-alanine + D-glutamate + ATP = UDP-N-acetyl-alpha-D-muramoyl-L-alanyl-D-glutamate + ADP + phosphate + H(+). It functions in the pathway cell wall biogenesis; peptidoglycan biosynthesis. Its function is as follows. Cell wall formation. Catalyzes the addition of glutamate to the nucleotide precursor UDP-N-acetylmuramoyl-L-alanine (UMA). The sequence is that of UDP-N-acetylmuramoylalanine--D-glutamate ligase from Oenococcus oeni (strain ATCC BAA-331 / PSU-1).